Reading from the N-terminus, the 464-residue chain is Peptidase inhibitor 16 (464 aa).

The N-terminal stretch at 1-27 (MHGSGSLLACLLPPLLLLGAAPGPAGA) is a signal peptide. The SCP domain occupies 37 to 165 (VELHNLYRTQ…TNIHLLVCNY (129 aa)). Asparagine 114 carries N-linked (GlcNAc...) asparagine glycosylation. Disordered stretches follow at residues 208–241 (DLSSLVPEAPSSLATEASSSRREGIDSSLATEPP), 260–281 (VETKAPSSLVTEDSPSMATKTP), 304–347 (PATL…LMGT), and 386–412 (TTLKHKGHSSSKSLSNSPSASATANAV). The segment covering 311 to 325 (STHDPIPKSADKEAS) has biased composition (basic and acidic residues). The segment covering 395–411 (SSKSLSNSPSASATANA) has biased composition (low complexity).

Belongs to the CRISP family. As to quaternary structure, interacts with PSP94/MSMB. Post-translationally, N-glycosylated.

The protein resides in the secreted. Functionally, may inhibit cardiomyocyte growth. This chain is Peptidase inhibitor 16 (PI16), found in Bos taurus (Bovine).